Reading from the N-terminus, the 501-residue chain is Cytochrome P450 90A4 (501 aa).

Residues 2 to 22 form a helical membrane-spanning segment; it reads AAAALLLLAAAAAAVVVAMAL. Cys-446 is a binding site for heme.

The protein belongs to the cytochrome P450 family. It depends on heme as a cofactor.

Its subcellular location is the membrane. Its pathway is plant hormone biosynthesis; brassinosteroid biosynthesis. In terms of biological role, catalyzes the C23-alpha-hydroxylation step in brassinosteroid biosynthesis. Converts 6-deoxocathasterone to 6-deoxoteasterone in the late C6-oxidation pathway and cathasterone to teasterone (TE) in the early C6-oxidation pathway of brassinolide (BL) biosynthesis. The protein is Cytochrome P450 90A4 of Oryza sativa subsp. indica (Rice).